The sequence spans 380 residues: Acyl-coenzyme A diphosphatase SCS3 (380 aa).

At 1–7 the chain is on the cytoplasmic side; sequence MSSKWFN. Residues 8–28 form a helical membrane-spanning segment; it reads AIHLLVCPLTVLVGYLMNAYG. Topologically, residues 29–43 are lumenal; the sequence is YGAALQATLNKDGLV. The helical transmembrane segment at 44-64 threads the bilayer; the sequence is NAMLVKKGWFWTSLVGWWCII. The Cytoplasmic portion of the chain corresponds to 65-88; that stretch reads RYRAVPGATGRDRRHIVQSFKRYA. A helical transmembrane segment spans residues 89–109; the sequence is ILTVWWYVFTQGIWFGVGPIM. The Lumenal segment spans residues 110–233; that stretch reads DLVFVYTGGH…GHWAGGHDPS (124 aa). Residues 234–254 form a helical membrane-spanning segment; that stretch reads GHVFLATLMCMFLLGELRVFG. Residue His235 is part of the active site. Over 255–325 the chain is Cytoplasmic; it reads RRALAHLYAQ…LTRCIACDHP (71 aa). Residues 326–346 form a helical membrane-spanning segment; it reads VIILLTLLVTWLWQLLLTAVA. The Lumenal portion of the chain corresponds to 347-356; the sequence is SRFHTVREHM. His350 is a catalytic residue. Residues 357–377 form a helical membrane-spanning segment; sequence SGLLAAYIVTGLVYARDAAAL. Topologically, residues 378-380 are cytoplasmic; the sequence is RPV.

It belongs to the FIT family. Fungal FIT2B/SCS3 subfamily.

The protein resides in the endoplasmic reticulum membrane. It catalyses the reaction an acyl-CoA + H2O = an acyl-4'-phosphopantetheine + adenosine 3',5'-bisphosphate + 2 H(+). It carries out the reaction (9Z)-octadecenoyl-CoA + H2O = S-(9Z-octadecenoyl)-4'-phosphopantetheine + adenosine 3',5'-bisphosphate + 2 H(+). The catalysed reaction is (5Z,8Z,11Z,14Z)-eicosatetraenoyl-CoA + H2O = S-(5Z,8Z,11Z,14Z-eicosatetraenoyl)-4'-phosphopantetheine + adenosine 3',5'-bisphosphate + 2 H(+). The enzyme catalyses hexadecanoyl-CoA + H2O = S-hexadecanoyl-4'-phosphopantetheine + adenosine 3',5'-bisphosphate + 2 H(+). Fatty acyl-coenzyme A (CoA) diphosphatase that hydrolyzes fatty acyl-CoA to yield acyl-4'-phosphopantetheine and adenosine 3',5'-bisphosphate. Preferentially hydrolyzes unsaturated long-chain acyl-CoA substrates in the endoplasmic reticulum (ER) lumen. This catalytic activity is required for maintaining ER structure and for lipid droplets (LDs) biogenesis, which are lipid storage organelles involved in maintaining lipid and energy homeostasis. May directly bind to diacylglycerol (DAGs) and triacylglycerol, which is also important for LD biogenesis. May support directional budding of nacent LDs from the ER into the cytosol by reducing DAG levels at sites of LD formation. May play a role in the regulation of cell morphology and cytoskeletal organization. Involved in phospholipid biosynthesis. The sequence is that of Acyl-coenzyme A diphosphatase SCS3 from Saccharomyces cerevisiae (strain ATCC 204508 / S288c) (Baker's yeast).